We begin with the raw amino-acid sequence, 775 residues long: Dipeptidyl peptidase 4 (775 aa).

The N-terminal stretch at M1–A15 is a signal peptide. N81, N111, and N219 each carry an N-linked (GlcNAc...) asparagine glycan. Catalysis depends on charge relay system residues S613, D690, and H725. N-linked (GlcNAc...) asparagine glycosylation is present at N731.

This sequence belongs to the peptidase S9B family.

It localises to the secreted. The catalysed reaction is Release of an N-terminal dipeptide, Xaa-Yaa-|-Zaa-, from a polypeptide, preferentially when Yaa is Pro, provided Zaa is neither Pro nor hydroxyproline.. Extracellular dipeptidyl-peptidase which removes N-terminal dipeptides sequentially from polypeptides having unsubstituted N-termini provided that the penultimate residue is proline. Contributes to pathogenicity. This is Dipeptidyl peptidase 4 (DPP4) from Arthroderma otae (strain ATCC MYA-4605 / CBS 113480) (Microsporum canis).